The chain runs to 441 residues: POC1 centriolar protein homolog A (441 aa).

7 WD repeats span residues 16-55, 58-97, 100-139, 142-181, 184-223, 226-265, and 268-307; these read GHRDTVTTVDFNPNTKQLASGSMDSCLMIWNMKPQMRAYR, GHKDAILSVDFSPSGHLIASASRDKTVRLWVPSVKGESTV, AHTGTVRSVSFSGDGQSLVTASDDKTIKVWTVHRQKFLFS, QHINWVRCAKFSPDGRLIVSASDDKTIKLWDKTSRECIHS, EHGGFVNFVDFHPSGTCIAAAATDNTVKVWDIRMNKLIQH, VHSGVVNSLSFHPSGNYLITASNDSTLKVLDLLEGRLLYT, and GHQGPVTSVKFSREGEFFASGGSDEQVMVWKTNFDSASYA. Positions 323–380 are disordered; the sequence is DYTSGVPAADRHRPERNAQTDQADDLEPRHIQMSAKDRSSPLSYTSRSIDQHHPQAED. Basic and acidic residues-rich tracts occupy residues 331-340, 348-361, and 371-380; these read ADRHRPERNA, LEPRHIQMSAKDRS, and IDQHHPQAED. Positions 400–427 form a coiled coil; it reads LTRTVGILEQRLSLTEDKLKECIDNQQA.

The protein belongs to the WD repeat POC1 family. As to quaternary structure, interacts with pat.

Its subcellular location is the cytoplasm. The protein localises to the cytoskeleton. Functionally, may play an important role in centriole assembly and/or stability and ciliogenesis. The protein is POC1 centriolar protein homolog A (poc1a) of Xenopus tropicalis (Western clawed frog).